A 192-amino-acid chain; its full sequence is Early nodulin-like protein 7 (192 aa).

The signal sequence occupies residues 1-27; the sequence is MMMMMMRSTCNLTLMLCICALVVASMA. Residues 32 to 134 enclose the Phytocyanin domain; sequence RDFKVGDEFG…GQRLIVEVMH (103 aa). N-linked (GlcNAc...) asparagine glycosylation is found at asparagine 48, asparagine 89, and asparagine 101. A disulfide bridge links cysteine 88 with cysteine 122. A lipid anchor (GPI-anchor amidated serine) is attached at serine 166. The propeptide at 167–192 is removed in mature form; it reads AASSLPTACLLIPLFLTIASFRFISY.

This sequence belongs to the early nodulin-like (ENODL) family. As to expression, mostly expressed in flowers, and, to a lower extent, in seeds, but barely in seedlings, stems, leaves and roots.

Its subcellular location is the cell membrane. Its function is as follows. May act as a carbohydrate transporter. The polypeptide is Early nodulin-like protein 7 (Arabidopsis thaliana (Mouse-ear cress)).